A 247-amino-acid polypeptide reads, in one-letter code: Adenosylcobinamide-GDP ribazoletransferase (247 aa).

Helical transmembrane passes span 31–51, 57–77, 109–129, 136–156, 189–209, and 218–238; these read VVWF…AAAL, PWLG…GLHL, FGVI…HWLL, PALV…TLLL, ITPI…WMWL, and ILGA…GVSL.

The protein belongs to the CobS family. The cofactor is Mg(2+).

The protein resides in the cell inner membrane. The enzyme catalyses alpha-ribazole + adenosylcob(III)inamide-GDP = adenosylcob(III)alamin + GMP + H(+). It carries out the reaction alpha-ribazole 5'-phosphate + adenosylcob(III)inamide-GDP = adenosylcob(III)alamin 5'-phosphate + GMP + H(+). It functions in the pathway cofactor biosynthesis; adenosylcobalamin biosynthesis; adenosylcobalamin from cob(II)yrinate a,c-diamide: step 7/7. Its function is as follows. Joins adenosylcobinamide-GDP and alpha-ribazole to generate adenosylcobalamin (Ado-cobalamin). Also synthesizes adenosylcobalamin 5'-phosphate from adenosylcobinamide-GDP and alpha-ribazole 5'-phosphate. The polypeptide is Adenosylcobinamide-GDP ribazoletransferase (Thiobacillus denitrificans (strain ATCC 25259 / T1)).